A 220-amino-acid chain; its full sequence is Sec-independent protein translocase protein TatB (220 aa).

The chain crosses the membrane as a helical span at residues methionine 1–glycine 21. Residues lysine 192–glutamine 220 are disordered.

The protein belongs to the TatB family. In terms of assembly, the Tat system comprises two distinct complexes: a TatABC complex, containing multiple copies of TatA, TatB and TatC subunits, and a separate TatA complex, containing only TatA subunits. Substrates initially bind to the TatABC complex, which probably triggers association of the separate TatA complex to form the active translocon.

Its subcellular location is the cell inner membrane. Its function is as follows. Part of the twin-arginine translocation (Tat) system that transports large folded proteins containing a characteristic twin-arginine motif in their signal peptide across membranes. Together with TatC, TatB is part of a receptor directly interacting with Tat signal peptides. TatB may form an oligomeric binding site that transiently accommodates folded Tat precursor proteins before their translocation. This Yersinia pestis bv. Antiqua (strain Antiqua) protein is Sec-independent protein translocase protein TatB.